The chain runs to 319 residues: Ribonucleoside-diphosphate reductase 2 subunit beta (319 aa).

Residues D67, E98, and H101 each contribute to the Fe cation site. The active site involves Y105. Fe cation-binding residues include E158, E192, and H195.

Belongs to the ribonucleoside diphosphate reductase small chain family. Tetramer of two alpha and two beta subunits. The cofactor is Fe cation.

It carries out the reaction a 2'-deoxyribonucleoside 5'-diphosphate + [thioredoxin]-disulfide + H2O = a ribonucleoside 5'-diphosphate + [thioredoxin]-dithiol. Provides the precursors necessary for DNA synthesis. Catalyzes the biosynthesis of deoxyribonucleotides from the corresponding ribonucleotides. R2F contains the tyrosyl radical required for catalysis. This chain is Ribonucleoside-diphosphate reductase 2 subunit beta (nrdF), found in Escherichia coli (strain K12).